We begin with the raw amino-acid sequence, 235 residues long: Small ribosomal subunit protein uS2 (235 aa).

This sequence belongs to the universal ribosomal protein uS2 family.

This Geobacillus thermodenitrificans (strain NG80-2) protein is Small ribosomal subunit protein uS2.